A 419-amino-acid chain; its full sequence is Glucose-1-phosphate adenylyltransferase (419 aa).

Residues Tyr107, Gly172, 187 to 188 (EK), and Ser205 contribute to the alpha-D-glucose 1-phosphate site.

This sequence belongs to the bacterial/plant glucose-1-phosphate adenylyltransferase family. Homotetramer.

The enzyme catalyses alpha-D-glucose 1-phosphate + ATP + H(+) = ADP-alpha-D-glucose + diphosphate. It functions in the pathway glycan biosynthesis; glycogen biosynthesis. Functionally, involved in the biosynthesis of ADP-glucose, a building block required for the elongation reactions to produce glycogen. Catalyzes the reaction between ATP and alpha-D-glucose 1-phosphate (G1P) to produce pyrophosphate and ADP-Glc. The polypeptide is Glucose-1-phosphate adenylyltransferase (Novosphingobium aromaticivorans (strain ATCC 700278 / DSM 12444 / CCUG 56034 / CIP 105152 / NBRC 16084 / F199)).